A 227-amino-acid chain; its full sequence is RNA pyrophosphohydrolase (227 aa).

Positions 6–149 (GFRPNVGIIL…KRDVYQMALT (144 aa)) constitute a Nudix hydrolase domain. Positions 38 to 59 (GGIKYGETPEQAMYRELHEEIG) match the Nudix box motif. The disordered stretch occupies residues 165–227 (PYGTHGAHGA…PVSTTRSTDD (63 aa)). The segment covering 192–201 (AQAAQQADAD) has biased composition (low complexity). Residues 217-227 (TPVSTTRSTDD) show a composition bias toward polar residues.

It belongs to the Nudix hydrolase family. RppH subfamily. It depends on a divalent metal cation as a cofactor.

Its function is as follows. Accelerates the degradation of transcripts by removing pyrophosphate from the 5'-end of triphosphorylated RNA, leading to a more labile monophosphorylated state that can stimulate subsequent ribonuclease cleavage. The protein is RNA pyrophosphohydrolase of Cupriavidus taiwanensis (strain DSM 17343 / BCRC 17206 / CCUG 44338 / CIP 107171 / LMG 19424 / R1) (Ralstonia taiwanensis (strain LMG 19424)).